Here is a 477-residue protein sequence, read N- to C-terminus: Protein RdxB (477 aa).

Over 1–29 the chain is Cytoplasmic; sequence MTSPDTQTSSLYAKREPVFPKRVSGKFRS. The helical transmembrane segment at 30–50 threads the bilayer; that stretch reads LKWWIMGVTLGIYYIAPWLRW. Residues 51–81 are Periplasmic-facing; sequence DRGPNLPDQAILVDLANRRFFFFMIEIWPHE. Residues 82–102 form a helical membrane-spanning segment; it reads FYFVAGLLIMAGLGLFLFTSA. The Cytoplasmic segment spans residues 103 to 154; it reads AGRVWCGYACPQTVWTDLFILVERWVEGDRNARIRLLRQRWDLEKTRKYLTK. A helical transmembrane segment spans residues 155-175; sequence WTLWLLIGLATGGAWVFYFTD. The Periplasmic segment spans residues 176 to 189; that stretch reads APTLLVDLLTGNAH. A helical transmembrane segment spans residues 190 to 210; the sequence is PVAYITMATLTATTFAFGGFA. At 211-338 the chain is on the cytoplasmic side; it reads REQICIYACP…SAWRHVFRLR (128 aa). The 4Fe-4S ferredoxin-type domain occupies 253–281; sequence EPLSPDQGDCIDCMACVNVCPMGIDIRDG. C262, C265, C268, C272, C286, C289, C292, and C296 together coordinate [4Fe-4S] cluster. Residues 339–359 traverse the membrane as a helical segment; sequence TLIYTALWSGVGLALIVALFL. Residues 360–477 are Periplasmic-facing; it reads RSPIDINVTP…HDTIFNGRGN (118 aa).

[4Fe-4S] cluster is required as a cofactor.

It is found in the cell membrane. Involved in a membrane generated redox signal; required to maintain repression of photosynthesis gene expression in the presence of oxygen. This is Protein RdxB (rdxB) from Cereibacter sphaeroides (strain ATCC 17023 / DSM 158 / JCM 6121 / CCUG 31486 / LMG 2827 / NBRC 12203 / NCIMB 8253 / ATH 2.4.1.) (Rhodobacter sphaeroides).